The sequence spans 275 residues: MTRFAPGAPAWFDLGSPDVAASADFYTGLFGWTATVVSDPGAGGYTTFSSDGKLVAAVARHQIDTPYHRPYGPGNDQHGMPAIWTVYFATNDADALTKRVETAGGDVIMTPMDVLGLGRMAVFADPSGAAFAVWRKGVMEGAEVTGVPGSVGWVELVTDDIGTARGFYRATLGLAPADTGRKGVTDPVWHIHDTPVAGTRELGTTGAVRPHWAVLFSVHDCDATVRRAVELGGSVENEPVDTPRGRRADLLDPHGAGFSVVELREAYPAAADGAS.

VOC domains follow at residues 8 to 136 (APAW…VWRK) and 150 to 263 (SVGW…VVEL).

The protein operates within antibiotic biosynthesis; daunorubicin biosynthesis. Its pathway is antibiotic biosynthesis; carminomycin biosynthesis. Functionally, involved in the biosynthesis of the anthracyclines carminomycin and daunorubicin (daunomycin) which are aromatic polyketide antibiotics that exhibit high cytotoxicity and are widely applied in the chemotherapy of a variety of cancers. Acts jointly with DoxA in the conversion of 13-deoxycarminomycin and 13-deoxydaunorubicin to yield carminomycin and daunorubicin, respectively. This Streptomyces sp. (strain C5) protein is Anthracycline biosynthesis protein DauV (dauV).